A 247-amino-acid polypeptide reads, in one-letter code: Probable phosphatase Shew_1420 (247 aa).

His8, His10, His16, His41, Glu74, His102, His132, Asp193, and His195 together coordinate Zn(2+).

This sequence belongs to the PHP family. Zn(2+) serves as cofactor.

The polypeptide is Probable phosphatase Shew_1420 (Shewanella loihica (strain ATCC BAA-1088 / PV-4)).